The primary structure comprises 490 residues: MGAGGPRRGAGPPDGGWGWVVLGACFVITGFAYGFPKAVSVFFRELKRDFGAGYSDTAWVSSIMLAMLYGTGPLSSILVTRFGCRPVMLAGGLLASAGMILASFASRLLELYLTAGVLTGLGLALNFQPSLIMLGLYFERRRPLANGLAAAGSPVFLSTLSPLGQLLGERFGWRGGFLLFGGLLLHCCACGAVMRPPPGPQPRPDPAPPGGRARHRQLLDLAVCTDRTFMVYMVTKFLMALGLFVPAILLVNYAKDAGVPDAEAAFLLSIVGFVDIVARPACGALAGLGRLRPHVPYLFSLALLANGLTDLISARARSYGTLVAFCIAFGLSYGMVGALQFEVLMATVGAPRFPSALGLVLLVEAVAVLIGPPSAGRLVDALKNYEIIFYLAGSEVVLAGVFMAVTTYCCQRCSKDIPPGPSAEGGTSDTEDVEAERDSEPMPASTEEPGSLEALEVLSPRAGSPEPEEEAVPDLSHESVGGHEAHGQNA.

The Cytoplasmic portion of the chain corresponds to Met1–Asp14. The chain crosses the membrane as a helical span at residues Gly15–Phe35. Over Pro36 to Ala58 the chain is Extracellular. Residues Trp59–Val79 form a helical membrane-spanning segment. Over Thr80–Arg85 the chain is Cytoplasmic. The helical transmembrane segment at Pro86–Ser106 threads the bilayer. The Extracellular segment spans residues Arg107–Ala115. A helical transmembrane segment spans residues Gly116–Leu136. Residues Tyr137–Gly147 lie on the Cytoplasmic side of the membrane. A helical transmembrane segment spans residues Leu148–Gly168. Topologically, residues Glu169–Gly172 are extracellular. The helical transmembrane segment at Trp173 to Val193 threads the bilayer. The Cytoplasmic segment spans residues Met194–Met230. The helical transmembrane segment at Val231 to Val251 threads the bilayer. The Extracellular segment spans residues Asn252 to Ala257. A helical transmembrane segment spans residues Gly258–Ala278. Over Arg279–Pro293 the chain is Cytoplasmic. A helical transmembrane segment spans residues His294–Ala314. The Extracellular portion of the chain corresponds to Arg315–Ser318. A helical transmembrane segment spans residues Tyr319–Leu339. Over Gln340 to Arg352 the chain is Cytoplasmic. A helical transmembrane segment spans residues Phe353–Pro373. Residues Ser374–Glu386 are Extracellular-facing. Residues Ile387 to Thr407 traverse the membrane as a helical segment. Residues Tyr408–Ala490 lie on the Cytoplasmic side of the membrane. A disordered region spans residues Pro419 to Ala490. Basolateral sorting signal stretches follow at residues Gly426–Pro460 and Arg461–Val480. The span at Leu475 to Ala490 shows a compositional bias: basic and acidic residues.

This sequence belongs to the major facilitator superfamily. Monocarboxylate porter (TC 2.A.1.13) family. In terms of tissue distribution, retinal pigment epithelium.

It localises to the basolateral cell membrane. It carries out the reaction (S)-lactate(in) + H(+)(in) = (S)-lactate(out) + H(+)(out). Functionally, probable retinal pigment epithelium (RPE)-specific proton-coupled L-lactate transporter. May facilitate transport of lactate and H(+) out of the retina and could therefore play a role in pH and ion homeostasis of the outer retina. The protein is Monocarboxylate transporter 3 (Slc16a8) of Rattus norvegicus (Rat).